The following is a 131-amino-acid chain: Small ribosomal subunit protein bS6 (131 aa).

Residues 96–131 (VTEASPMAKAKDERDSRRGPAGDRSYDEANAEEIAE) are disordered. A compositionally biased stretch (basic and acidic residues) spans 104 to 122 (KAKDERDSRRGPAGDRSYD).

The protein belongs to the bacterial ribosomal protein bS6 family.

Binds together with bS18 to 16S ribosomal RNA. The protein is Small ribosomal subunit protein bS6 of Shewanella sp. (strain ANA-3).